The chain runs to 462 residues: L-seryl-tRNA(Sec) selenium transferase (462 aa).

An N6-(pyridoxal phosphate)lysine modification is found at lysine 295.

This sequence belongs to the SelA family. In terms of assembly, homodecamer; pentamer of dimers. Binds only one seryl-tRNA(Sec) per dimer. Pyridoxal 5'-phosphate is required as a cofactor.

Its subcellular location is the cytoplasm. The catalysed reaction is L-seryl-tRNA(Sec) + selenophosphate + H(+) = L-selenocysteinyl-tRNA(Sec) + phosphate. It functions in the pathway aminoacyl-tRNA biosynthesis; selenocysteinyl-tRNA(Sec) biosynthesis; selenocysteinyl-tRNA(Sec) from L-seryl-tRNA(Sec) (bacterial route): step 1/1. Converts seryl-tRNA(Sec) to selenocysteinyl-tRNA(Sec) required for selenoprotein biosynthesis. The chain is L-seryl-tRNA(Sec) selenium transferase from Klebsiella pneumoniae (strain 342).